We begin with the raw amino-acid sequence, 198 residues long: MTINLILLSLLAYVIGSIPSGLWIGKIFYKKDIRDFGSGNLGATNSFRVLGIKAGSIVTVMDILKGTVATLLPFFFQLNVDHHFWLLTGAFAIIGHSFPLFAGFRGGKAVATSAGVILAYAPLLFVAALVVFLVTLKLSKYVSLSSMIGALAALIISLFMGDWILIILVACIALFVIWRHRANITRIRNGEEPKIKWM.

The next 5 membrane-spanning stretches (helical) occupy residues 5-25, 56-76, 84-104, 114-134, and 158-178; these read LILLSLLAYVIGSIPSGLWIG, SIVTVMDILKGTVATLLPFFF, FWLLTGAFAIIGHSFPLFAGF, AGVILAYAPLLFVAALVVFLV, and LFMGDWILIILVACIALFVIW.

This sequence belongs to the PlsY family. In terms of assembly, probably interacts with PlsX.

It localises to the cell membrane. The enzyme catalyses an acyl phosphate + sn-glycerol 3-phosphate = a 1-acyl-sn-glycero-3-phosphate + phosphate. It functions in the pathway lipid metabolism; phospholipid metabolism. In terms of biological role, catalyzes the transfer of an acyl group from acyl-phosphate (acyl-PO(4)) to glycerol-3-phosphate (G3P) to form lysophosphatidic acid (LPA). This enzyme utilizes acyl-phosphate as fatty acyl donor, but not acyl-CoA or acyl-ACP. The polypeptide is Glycerol-3-phosphate acyltransferase (Listeria monocytogenes serotype 4b (strain CLIP80459)).